The chain runs to 491 residues: Iota-carrageenase (491 aa).

Positions 1-19 (MKLQFKPVYLASIAIMAIG) are cleaved as a signal peptide. C422 and C490 are oxidised to a cystine.

It belongs to the glycosyl hydrolase 82 family.

The protein resides in the secreted. The enzyme catalyses Endohydrolysis of 1,4-beta-D-linkages between D-galactose 4-sulfate and 3,6-anhydro-D-galactose-2-sulfate in iota-carrageenans.. Functionally, hydrolyzes iota-carrageenans, sulfated 1,3-alpha-1,4-beta galactans from red algal cell walls, with an inversion of anomeric configuration. Also active against hybrid iota-/nu-carrageenan, not active against kappa- or lambda-carrageenans. This is Iota-carrageenase from Zobellia galactanivorans (strain DSM 12802 / CCUG 47099 / CIP 106680 / NCIMB 13871 / Dsij).